The following is a 510-amino-acid chain: ATP synthase subunit alpha (510 aa).

G170–T177 is an ATP binding site.

It belongs to the ATPase alpha/beta chains family. As to quaternary structure, F-type ATPases have 2 components, CF(1) - the catalytic core - and CF(0) - the membrane proton channel. CF(1) has five subunits: alpha(3), beta(3), gamma(1), delta(1), epsilon(1). CF(0) has three main subunits: a(1), b(2) and c(9-12). The alpha and beta chains form an alternating ring which encloses part of the gamma chain. CF(1) is attached to CF(0) by a central stalk formed by the gamma and epsilon chains, while a peripheral stalk is formed by the delta and b chains.

It is found in the cell inner membrane. The catalysed reaction is ATP + H2O + 4 H(+)(in) = ADP + phosphate + 5 H(+)(out). Functionally, produces ATP from ADP in the presence of a proton gradient across the membrane. The alpha chain is a regulatory subunit. The chain is ATP synthase subunit alpha from Caulobacter vibrioides (strain ATCC 19089 / CIP 103742 / CB 15) (Caulobacter crescentus).